Reading from the N-terminus, the 176-residue chain is MNKDDDKEGLAMFSALIDGIKPITQNKRHFRTPLKTKQEIELKEQQLHANSYFSDTYQPLLPVQGPMRWLEEGIDSLELKRLRRGDYQPDLLLDLHGYRQSEAKLELAALIQACVKQQSLCCCIMHGYGSGILKQQVPMWLVQHPMVKAFHQAPKEWGGDAALLVLIDIGEQPHRR.

The region spanning 93-168 is the Smr domain; the sequence is LDLHGYRQSE…GDAALLVLID (76 aa).

This sequence belongs to the SmrB family. In terms of assembly, associates with collided ribosomes, but not with correctly translating polysomes.

Acts as a ribosome collision sensor. Detects stalled/collided disomes (pairs of ribosomes where the leading ribosome is stalled and a second ribosome has collided with it) and endonucleolytically cleaves mRNA at the 5' boundary of the stalled ribosome. Stalled/collided disomes form a new interface (primarily via the 30S subunits) that binds SmrB. Cleaved mRNA becomes available for tmRNA ligation, leading to ribosomal subunit dissociation and rescue of stalled ribosomes. This is Ribosome rescue factor SmrB from Shewanella baltica (strain OS195).